The chain runs to 239 residues: MKLSTIFTAFAATIATVAGYETTGSKQTVDILIDYIIKETPELSQNDVANWENGDTVTLQYVVNNNEESEITVVGVTGQFKNPVNNEIVTNLTTGKVGPIAVPPGEAIKFDQKINVDLIPANYELIPYVFIAQDSLIKVIPCRGQLATIVDAAVSFFDPRLIFLELVLLITFAGLIYVGYEIWGKQYFKGVAPVKAKKVSAAKASSPVASGPSTTSATGYDTNWIPESHLKQKKTKKVN.

A signal peptide spans 1–19 (MKLSTIFTAFAATIATVAG). The Lumenal portion of the chain corresponds to 20-161 (YETTGSKQTV…AAVSFFDPRL (142 aa)). The helical transmembrane segment at 162–182 (IFLELVLLITFAGLIYVGYEI) threads the bilayer. Topologically, residues 183–239 (WGKQYFKGVAPVKAKKVSAAKASSPVASGPSTTSATGYDTNWIPESHLKQKKTKKVN) are cytoplasmic. Over residues 201–213 (AAKASSPVASGPS) the composition is skewed to low complexity. Positions 201–222 (AAKASSPVASGPSTTSATGYDT) are disordered.

This sequence belongs to the IRC22 family.

The protein localises to the endoplasmic reticulum membrane. Functionally, is probably involved in a pathway contributing to genomic integrity. This is Increased recombination centers protein 22-1 (IRC22-1) from Candida albicans (strain SC5314 / ATCC MYA-2876) (Yeast).